The primary structure comprises 347 residues: L-threonine 3-dehydrogenase (347 aa).

Residue cysteine 42 participates in Zn(2+) binding. Active-site charge relay system residues include threonine 44 and histidine 47. Histidine 67, glutamate 68, cysteine 97, cysteine 100, cysteine 103, and cysteine 111 together coordinate Zn(2+). NAD(+) contacts are provided by residues isoleucine 179, glutamate 199, arginine 204, 266–268 (LGL), and 291–292 (IT).

This sequence belongs to the zinc-containing alcohol dehydrogenase family. Homotetramer. The cofactor is Zn(2+).

It is found in the cytoplasm. The catalysed reaction is L-threonine + NAD(+) = (2S)-2-amino-3-oxobutanoate + NADH + H(+). Its pathway is amino-acid degradation; L-threonine degradation via oxydo-reductase pathway; glycine from L-threonine: step 1/2. In terms of biological role, catalyzes the NAD(+)-dependent oxidation of L-threonine to 2-amino-3-ketobutyrate. The protein is L-threonine 3-dehydrogenase of Caldanaerobacter subterraneus subsp. tengcongensis (strain DSM 15242 / JCM 11007 / NBRC 100824 / MB4) (Thermoanaerobacter tengcongensis).